Here is a 187-residue protein sequence, read N- to C-terminus: GTP cyclohydrolase 1 (187 aa).

Residues C76, H79, and C148 each coordinate Zn(2+).

This sequence belongs to the GTP cyclohydrolase I family. Homomer.

The catalysed reaction is GTP + H2O = 7,8-dihydroneopterin 3'-triphosphate + formate + H(+). The protein operates within cofactor biosynthesis; 7,8-dihydroneopterin triphosphate biosynthesis; 7,8-dihydroneopterin triphosphate from GTP: step 1/1. The protein is GTP cyclohydrolase 1 of Streptococcus gordonii (strain Challis / ATCC 35105 / BCRC 15272 / CH1 / DL1 / V288).